The chain runs to 302 residues: Tyrosine recombinase XerC (302 aa).

The Core-binding (CB) domain maps to 6 to 90; that stretch reads DLEVTCLQDY…AIKQWGEFLL (85 aa). One can recognise a Tyr recombinase domain in the interval 111–290; it reads PLPKNMDVDS…DFQHLAKVYD (180 aa). Catalysis depends on residues R150, K174, H242, R245, and H268. The active-site O-(3'-phospho-DNA)-tyrosine intermediate is Y277.

Belongs to the 'phage' integrase family. XerC subfamily. Forms a cyclic heterotetrameric complex composed of two molecules of XerC and two molecules of XerD.

The protein localises to the cytoplasm. Its function is as follows. Site-specific tyrosine recombinase, which acts by catalyzing the cutting and rejoining of the recombining DNA molecules. The XerC-XerD complex is essential to convert dimers of the bacterial chromosome into monomers to permit their segregation at cell division. It also contributes to the segregational stability of plasmids. The chain is Tyrosine recombinase XerC from Shewanella putrefaciens (strain CN-32 / ATCC BAA-453).